A 58-amino-acid polypeptide reads, in one-letter code: Large ribosomal subunit protein bL32 (58 aa).

Over residues 1-15 (MAVPKKKTSKAKRNQ) the composition is skewed to basic residues. The segment at 1–23 (MAVPKKKTSKAKRNQRSATWKGK) is disordered.

This sequence belongs to the bacterial ribosomal protein bL32 family.

The sequence is that of Large ribosomal subunit protein bL32 from Parasynechococcus marenigrum (strain WH8102).